We begin with the raw amino-acid sequence, 278 residues long: NAD-capped RNA hydrolase NudC (278 aa).

Arg84 contributes to the substrate binding site. Zn(2+) contacts are provided by Cys114 and Cys117. Glu127 lines the substrate pocket. Cys132 serves as a coordination point for Zn(2+). Tyr140 is a binding site for substrate. The region spanning 141 to 264 is the Nudix hydrolase domain; it reads PRISPSMIVL…SIARYLIEAY (124 aa). A divalent metal cation is bound by residues Ala174, Glu190, and Glu194. The short motif at 175–196 is the Nudix box element; it reads GFVEPGESAEDCVHREVMEEVQ. Position 208 to 215 (208 to 215) interacts with substrate; the sequence is QCWPFPHS. Glu235 provides a ligand contact to a divalent metal cation. Position 257 (Ala257) interacts with substrate.

The protein belongs to the Nudix hydrolase family. NudC subfamily. In terms of assembly, homodimer. Mg(2+) is required as a cofactor. It depends on Mn(2+) as a cofactor. Requires Zn(2+) as cofactor.

The enzyme catalyses a 5'-end NAD(+)-phospho-ribonucleoside in mRNA + H2O = a 5'-end phospho-adenosine-phospho-ribonucleoside in mRNA + beta-nicotinamide D-ribonucleotide + 2 H(+). The catalysed reaction is NAD(+) + H2O = beta-nicotinamide D-ribonucleotide + AMP + 2 H(+). It carries out the reaction NADH + H2O = reduced beta-nicotinamide D-ribonucleotide + AMP + 2 H(+). In terms of biological role, mRNA decapping enzyme that specifically removes the nicotinamide adenine dinucleotide (NAD) cap from a subset of mRNAs by hydrolyzing the diphosphate linkage to produce nicotinamide mononucleotide (NMN) and 5' monophosphate mRNA. The NAD-cap is present at the 5'-end of some mRNAs and stabilizes RNA against 5'-processing. Has preference for mRNAs with a 5'-end purine. Catalyzes the hydrolysis of a broad range of dinucleotide pyrophosphates. The protein is NAD-capped RNA hydrolase NudC of Pseudomonas syringae pv. syringae (strain B728a).